A 328-amino-acid polypeptide reads, in one-letter code: Beta-ketoacyl-[acyl-carrier-protein] synthase III (328 aa).

Catalysis depends on residues C114 and H253. The tract at residues 254-258 (QANIR) is ACP-binding. N283 is an active-site residue.

It belongs to the thiolase-like superfamily. FabH family. In terms of assembly, homodimer.

The protein localises to the cytoplasm. The catalysed reaction is malonyl-[ACP] + acetyl-CoA + H(+) = 3-oxobutanoyl-[ACP] + CO2 + CoA. Its pathway is lipid metabolism; fatty acid biosynthesis. Functionally, catalyzes the condensation reaction of fatty acid synthesis by the addition to an acyl acceptor of two carbons from malonyl-ACP. Catalyzes the first condensation reaction which initiates fatty acid synthesis and may therefore play a role in governing the total rate of fatty acid production. Possesses both acetoacetyl-ACP synthase and acetyl transacylase activities. Its substrate specificity determines the biosynthesis of branched-chain and/or straight-chain of fatty acids. The sequence is that of Beta-ketoacyl-[acyl-carrier-protein] synthase III from Clostridioides difficile (strain 630) (Peptoclostridium difficile).